The primary structure comprises 278 residues: Ribosomal RNA small subunit methyltransferase A (278 aa).

The S-adenosyl-L-methionine site is built by Asn25, Leu27, Gly52, Glu73, Asp97, and Asn117.

It belongs to the class I-like SAM-binding methyltransferase superfamily. rRNA adenine N(6)-methyltransferase family. RsmA subfamily.

Its subcellular location is the cytoplasm. The catalysed reaction is adenosine(1518)/adenosine(1519) in 16S rRNA + 4 S-adenosyl-L-methionine = N(6)-dimethyladenosine(1518)/N(6)-dimethyladenosine(1519) in 16S rRNA + 4 S-adenosyl-L-homocysteine + 4 H(+). Specifically dimethylates two adjacent adenosines (A1518 and A1519) in the loop of a conserved hairpin near the 3'-end of 16S rRNA in the 30S particle. May play a critical role in biogenesis of 30S subunits. The polypeptide is Ribosomal RNA small subunit methyltransferase A (Desulfitobacterium hafniense (strain DSM 10664 / DCB-2)).